The sequence spans 156 residues: Transcriptional repressor NrdR (156 aa).

A zinc finger lies at 3-34; it reads CPYCGETEDKVIDSRQGKEADVIRRRRECLSC. One can recognise an ATP-cone domain in the interval 49 to 139; it reads LVIIKKDGRR…VYREFKHVND (91 aa).

It belongs to the NrdR family. Zn(2+) serves as cofactor.

Functionally, negatively regulates transcription of bacterial ribonucleotide reductase nrd genes and operons by binding to NrdR-boxes. In Desulfatibacillum aliphaticivorans, this protein is Transcriptional repressor NrdR.